The following is a 352-amino-acid chain: Ion-translocating oxidoreductase complex subunit D (352 aa).

4 consecutive transmembrane segments (helical) span residues 20 to 40, 42 to 62, 69 to 91, and 123 to 143; these read IMLL…WFFG, GTLF…AIVL, VASH…SIPP, and PAMI…TSWL. Thr-187 carries the post-translational modification FMN phosphoryl threonine. 5 consecutive transmembrane segments (helical) span residues 215–235, 242–262, 267–287, 301–321, and 322–342; these read LAGV…VFLL, WHIP…GWLF, LASP…FFIL, LIFG…GGYP, and DGVA…DYYT.

Belongs to the NqrB/RnfD family. In terms of assembly, the complex is composed of six subunits: RsxA, RsxB, RsxC, RsxD, RsxE and RsxG. The cofactor is FMN.

The protein resides in the cell inner membrane. Its function is as follows. Part of a membrane-bound complex that couples electron transfer with translocation of ions across the membrane. Required to maintain the reduced state of SoxR. This Salmonella dublin (strain CT_02021853) protein is Ion-translocating oxidoreductase complex subunit D.